A 308-amino-acid polypeptide reads, in one-letter code: ATP synthase gamma chain (308 aa).

This sequence belongs to the ATPase gamma chain family. F-type ATPases have 2 components, CF(1) - the catalytic core - and CF(0) - the membrane proton channel. CF(1) has five subunits: alpha(3), beta(3), gamma(1), delta(1), epsilon(1). CF(0) has three main subunits: a, b and c.

Its subcellular location is the cell membrane. Functionally, produces ATP from ADP in the presence of a proton gradient across the membrane. The gamma chain is believed to be important in regulating ATPase activity and the flow of protons through the CF(0) complex. The polypeptide is ATP synthase gamma chain (Mycobacteroides abscessus (strain ATCC 19977 / DSM 44196 / CCUG 20993 / CIP 104536 / JCM 13569 / NCTC 13031 / TMC 1543 / L948) (Mycobacterium abscessus)).